Consider the following 627-residue polypeptide: Protein fem-1 homolog B (627 aa).

ANK repeat units follow at residues 45–74, 87–116, 120–149, 153–182, 186–215, and 218–248; these read QRSTPLIIAARNGHTKVVRLLLEHYRVQTQ, DGATALWCAAGAGHFEVVKLLVSHGANVNH, TNSTPLRAACFDGRLDIVKYLVENNANISI, YDNTCLMIAAYKGHTDVVRYLLEQHADPNA, CGATALHFAAEAGHLEIVRELVKWKAAMMV, and HGMTPLKVAAESCKADVVELLLAHAGCNRRS. Residues 344-377 form a TPR repeat; sequence SHPIIYRGAVYADNMEFEQCIKLWLHALHLRQKG. 2 ANK repeats span residues 483-527 and 531-568; these read DGST…DVNA and EGNSPLHLIVQYHRPISDFLTLHSIIISLVEAGAHTDM.

It belongs to the fem-1 family. In terms of assembly, component of a CRL2 E3 ubiquitin-protein ligase complex, also named ECS (Elongin BC-CUL2/5-SOCS-box protein) complex.

It is found in the cytoplasm. It localises to the nucleus. The protein operates within protein modification; protein ubiquitination. Substrate-recognition component of a Cul2-RING (CRL2) E3 ubiquitin-protein ligase complex of the DesCEND (destruction via C-end degrons) pathway, which recognizes a C-degron located at the extreme C terminus of target proteins, leading to their ubiquitination and degradation. The C-degron recognized by the DesCEND pathway is usually a motif of less than ten residues and can be present in full-length proteins, truncated proteins or proteolytically cleaved forms. The CRL2(FEM1B) complex specifically recognizes proteins ending with -Gly-Leu-Asp-Arg, leading to their ubiquitination and degradation. The sequence is that of Protein fem-1 homolog B from Gallus gallus (Chicken).